The sequence spans 359 residues: 2-epi-5-epi-valiolone 7-kinase (359 aa).

The disordered stretch occupies residues 28-48; the sequence is GGLGEVHTTPSPGHARRPGAG.

Belongs to the ROK (NagC/XylR) family.

The catalysed reaction is 2-epi-5-epi-valiolone + ATP = 2-epi-5-epi-valiolone 7-phosphate + ADP + H(+). Catalyzes the conversion of 2-epi-5-epi-valiolone to 2-epi-5-epi-valiolone 7-phosphate. Involved in the biosynthesis of the acarviose moiety of the alpha-glucosidase inhibitor acarbose. In Actinoplanes sp. (strain ATCC 31044 / CBS 674.73 / SE50/110), this protein is 2-epi-5-epi-valiolone 7-kinase.